Here is a 569-residue protein sequence, read N- to C-terminus: Pyrophosphate--fructose 6-phosphate 1-phosphotransferase subunit beta 2 (569 aa).

Gly107 is a diphosphate binding site. Asp201 provides a ligand contact to Mg(2+). Substrate is bound by residues Thr229 to Asp231, Lys268 to Tyr269, Met276 to Arg278, Glu337, and Tyr442 to Arg445. The Proton acceptor role is filled by Asp231.

Belongs to the phosphofructokinase type A (PFKA) family. PPi-dependent PFK group II subfamily. Clade 'Long' sub-subfamily. As to quaternary structure, tetramer of two alpha (regulatory) and two beta (catalytic) chains. Requires Mg(2+) as cofactor.

The protein resides in the cytoplasm. The enzyme catalyses beta-D-fructose 6-phosphate + diphosphate = beta-D-fructose 1,6-bisphosphate + phosphate + H(+). It functions in the pathway carbohydrate degradation; glycolysis; D-glyceraldehyde 3-phosphate and glycerone phosphate from D-glucose: step 3/4. With respect to regulation, allosterically activated by fructose 2,6-bisphosphate. In terms of biological role, catalytic subunit of pyrophosphate--fructose 6-phosphate 1-phosphotransferase. Catalyzes the phosphorylation of D-fructose 6-phosphate, the first committing step of glycolysis. Uses inorganic phosphate (PPi) as phosphoryl donor instead of ATP like common ATP-dependent phosphofructokinases (ATP-PFKs), which renders the reaction reversible, and can thus function both in glycolysis and gluconeogenesis. The chain is Pyrophosphate--fructose 6-phosphate 1-phosphotransferase subunit beta 2 from Arabidopsis thaliana (Mouse-ear cress).